The sequence spans 217 residues: Chaperone protein TorD (217 aa).

Belongs to the TorD/DmsD family. TorD subfamily.

The protein localises to the cytoplasm. Functionally, involved in the biogenesis of TorA. Acts on TorA before the insertion of the molybdenum cofactor and, as a result, probably favors a conformation of the apoenzyme that is competent for acquiring the cofactor. This chain is Chaperone protein TorD, found in Shewanella oneidensis (strain ATCC 700550 / JCM 31522 / CIP 106686 / LMG 19005 / NCIMB 14063 / MR-1).